The following is a 253-amino-acid chain: Phosphoribosylaminoimidazole-succinocarboxamide synthase (253 aa).

This sequence belongs to the SAICAR synthetase family.

The catalysed reaction is 5-amino-1-(5-phospho-D-ribosyl)imidazole-4-carboxylate + L-aspartate + ATP = (2S)-2-[5-amino-1-(5-phospho-beta-D-ribosyl)imidazole-4-carboxamido]succinate + ADP + phosphate + 2 H(+). It participates in purine metabolism; IMP biosynthesis via de novo pathway; 5-amino-1-(5-phospho-D-ribosyl)imidazole-4-carboxamide from 5-amino-1-(5-phospho-D-ribosyl)imidazole-4-carboxylate: step 1/2. This chain is Phosphoribosylaminoimidazole-succinocarboxamide synthase, found in Roseobacter denitrificans (strain ATCC 33942 / OCh 114) (Erythrobacter sp. (strain OCh 114)).